Consider the following 457-residue polypeptide: Multidrug resistance protein MdtK (457 aa).

Transmembrane regions (helical) follow at residues 11-31 (LLALAIPVILAQIAQTAMGFV), 53-73 (IWLPAILFGHGLLLALTPVIA), 93-113 (WLAGFVSVLIMLVLWNAGYII), 127-147 (AVGYLRALLWGAPGYLFFQVA), 160-180 (GMVMGFIGLLVNIPVNYIFIY), 189-209 (GGVGCGVATAAVYWVMFLAMV), 243-263 (LPIALALFFEVTLFAVVALLV), 276-296 (IALNFSSLMFVLPMSLAAAVT), 314-334 (AARTGLMVGVCMATLTAIFTV), 350-370 (VVTLAAHLMLLAAVYQISDSI), 387-407 (IFYITFTAYWVLGLPSGYILA), and 418-438 (PAGFWIGFIIGLTSAAIMMML).

It belongs to the multi antimicrobial extrusion (MATE) (TC 2.A.66.1) family. MdtK subfamily.

It localises to the cell inner membrane. Its function is as follows. Multidrug efflux pump that functions probably as a Na(+)/drug antiporter. The polypeptide is Multidrug resistance protein MdtK (Escherichia coli O17:K52:H18 (strain UMN026 / ExPEC)).